A 1083-amino-acid polypeptide reads, in one-letter code: DNA primase (1083 aa).

Residues 1022–1061 form a CHC2-type zinc finger; it reads CLRYPHRGGRTAPRTFVSLRVDHHNRLCISLAQQCFATKC.

It belongs to the herpesviridae DNA primase family. As to quaternary structure, associates with the helicase and the primase-associated factor to form the helicase-primase factor.

The protein localises to the host nucleus. Its function is as follows. Essential component of the helicase/primase complex. Unwinds the DNA at the replication forks and generates single-stranded DNA for both leading and lagging strand synthesis. The primase initiates primer synthesis and thereby produces large amount of short RNA primers on the lagging strand that the polymerase elongates using dNTPs. This is DNA primase from Varicella-zoster virus (strain Oka vaccine) (HHV-3).